The sequence spans 491 residues: 2,3-bisphosphoglycerate-independent phosphoglycerate mutase (491 aa).

2 residues coordinate Mn(2+): Asp11 and Ser61. Catalysis depends on Ser61, which acts as the Phosphoserine intermediate. Residues His118, 147–148 (RD), Arg177, Arg183, 248–251 (RSDR), and Lys320 each bind substrate. Mn(2+) contacts are provided by Asp386, His390, Asp427, His428, and His445.

The protein belongs to the BPG-independent phosphoglycerate mutase family. Monomer. Mn(2+) serves as cofactor.

The catalysed reaction is (2R)-2-phosphoglycerate = (2R)-3-phosphoglycerate. Its pathway is carbohydrate degradation; glycolysis; pyruvate from D-glyceraldehyde 3-phosphate: step 3/5. In terms of biological role, catalyzes the interconversion of 2-phosphoglycerate and 3-phosphoglycerate. This chain is 2,3-bisphosphoglycerate-independent phosphoglycerate mutase, found in Sulfurimonas denitrificans (strain ATCC 33889 / DSM 1251) (Thiomicrospira denitrificans (strain ATCC 33889 / DSM 1251)).